Reading from the N-terminus, the 481-residue chain is Rhamnogalacturonan I rhamnosyltransferase 4 (481 aa).

The helical; Signal-anchor for type II membrane protein transmembrane segment at 33-55 threads the bilayer; sequence VWFFRVCSCILVWTCLIQLFWHS. 2 N-linked (GlcNAc...) asparagine glycosylation sites follow: Asn85 and Asn118. Substrate is bound at residue 258 to 260; the sequence is HLR. Residues Asn372 and Asn432 are each glycosylated (N-linked (GlcNAc...) asparagine).

It belongs to the glycosyltransferase GT106 family.

It localises to the golgi apparatus membrane. The catalysed reaction is alpha-D-galacturonosyl-[(1-&gt;2)-alpha-L-rhamnosyl-(1-&gt;4)-alpha-D-galacturonosyl](n) + UDP-beta-L-rhamnose = [(1-&gt;2)-alpha-L-rhamnosyl-(1-&gt;4)-alpha-D-galacturonosyl](n+1) + UDP + H(+). It participates in glycan metabolism; pectin biosynthesis. Glycosyltransferase involved in the formation of rhamnogalacturonan I (RG-I) oligosaccharides in the seed coat mucilage, which is a specialized cell wall with abundant RG-I. Transfers the rhamnose residue from UDP-beta-L-rhamnose to RG-I oligosaccharides. The polypeptide is Rhamnogalacturonan I rhamnosyltransferase 4 (Arabidopsis thaliana (Mouse-ear cress)).